A 188-amino-acid polypeptide reads, in one-letter code: Protein GrpE 2 (188 aa).

Basic and acidic residues predominate over residues 1-29 (MDNQEKKTNYQNTDKENDLEKNKEKKNDE). Positions 1-33 (MDNQEKKTNYQNTDKENDLEKNKEKKNDESIFQ) are disordered.

It belongs to the GrpE family. As to quaternary structure, homodimer.

It localises to the cytoplasm. Participates actively in the response to hyperosmotic and heat shock by preventing the aggregation of stress-denatured proteins, in association with DnaK and GrpE. It is the nucleotide exchange factor for DnaK and may function as a thermosensor. Unfolded proteins bind initially to DnaJ; upon interaction with the DnaJ-bound protein, DnaK hydrolyzes its bound ATP, resulting in the formation of a stable complex. GrpE releases ADP from DnaK; ATP binding to DnaK triggers the release of the substrate protein, thus completing the reaction cycle. Several rounds of ATP-dependent interactions between DnaJ, DnaK and GrpE are required for fully efficient folding. This Buchnera aphidicola subsp. Schizaphis graminum (strain Sg) protein is Protein GrpE 2.